The following is a 165-amino-acid chain: UPF0669 protein v1g209471 (165 aa).

Residues 1–23 form the signal peptide; it reads MQGRYSAPLFLLLWLFFLHGTLC. Asparagine 38 is a glycosylation site (N-linked (GlcNAc...) asparagine).

It belongs to the UPF0669 family.

It localises to the secreted. In Nematostella vectensis (Starlet sea anemone), this protein is UPF0669 protein v1g209471.